The primary structure comprises 129 residues: Histone H2A.J (129 aa).

Positions 1 to 22 (MSGRGKQGGKVRAKAKSRSSRA) are disordered. Lysine 6 and lysine 10 each carry N6-acetyllysine. Residues 7 to 19 (QGGKVRAKAKSRS) are compositionally biased toward basic residues. Lysine 10 is subject to N6-lactoyllysine; alternate. An N5-methylglutamine modification is found at glutamine 105. The residue at position 121 (threonine 121) is a Phosphothreonine; by DCAF1.

Belongs to the histone H2A family. As to quaternary structure, the nucleosome is a histone octamer containing two molecules each of H2A, H2B, H3 and H4 assembled in one H3-H4 heterotetramer and two H2A-H2B heterodimers. The octamer wraps approximately 147 bp of DNA. Monoubiquitination of Lys-120 (H2AXK119ub) gives a specific tag for epigenetic transcriptional repression. Following DNA double-strand breaks (DSBs), it is ubiquitinated through 'Lys-63' linkage of ubiquitin moieties. Post-translationally, glutamine methylation at Gln-105 (H2AQ104me) by FBL is specifically dedicated to polymerase I. It is present at 35S ribosomal DNA locus and impairs binding of the FACT complex. In terms of processing, phosphorylation on Ser-2 (H2AS1ph) is enhanced during mitosis. Phosphorylation on Ser-2 by RPS6KA5/MSK1 directly represses transcription. Acetylation of H3 inhibits Ser-2 phosphorylation by RPS6KA5/MSK1. Phosphorylation at Thr-121 (H2AT120ph) by DCAF1 is present in the regulatory region of many tumor suppresor genes and down-regulates their transcription.

It localises to the nucleus. Its subcellular location is the chromosome. Its function is as follows. Core component of nucleosome. Nucleosomes wrap and compact DNA into chromatin, limiting DNA accessibility to the cellular machineries which require DNA as a template. Histones thereby play a central role in transcription regulation, DNA repair, DNA replication and chromosomal stability. DNA accessibility is regulated via a complex set of post-translational modifications of histones, also called histone code, and nucleosome remodeling. This Mus musculus (Mouse) protein is Histone H2A.J.